Here is a 264-residue protein sequence, read N- to C-terminus: MAKISVSRLTKMKQDNQKITCMTAYDASFAAIFDQAGIQVLLVGDSLGMVLQGHDSTLPVTVDDIRYHTAAVVSTAKSAFIIADLPFMSYSTPEMSYENAAILMRAGANMVKMEGGEWLTDSVKGLVERGIPVCGHLGLTPQSVNIFGGYKVQGREEEQADELLNDALLLQEAGIQLLVLECVPVSLADRITTALKIPVIGIGAGCETDGQILVMHDAFGVSAGFCPKFSKNFLLETGDIRQAVTLYIDQVESRQFPSAEHSFY.

The Mg(2+) site is built by Asp-45 and Asp-84. 3-methyl-2-oxobutanoate is bound by residues 45 to 46 (DS), Asp-84, and Lys-112. Glu-114 contacts Mg(2+). The Proton acceptor role is filled by Glu-181.

The protein belongs to the PanB family. As to quaternary structure, homodecamer; pentamer of dimers. It depends on Mg(2+) as a cofactor.

The protein resides in the cytoplasm. The catalysed reaction is 3-methyl-2-oxobutanoate + (6R)-5,10-methylene-5,6,7,8-tetrahydrofolate + H2O = 2-dehydropantoate + (6S)-5,6,7,8-tetrahydrofolate. The protein operates within cofactor biosynthesis; (R)-pantothenate biosynthesis; (R)-pantoate from 3-methyl-2-oxobutanoate: step 1/2. In terms of biological role, catalyzes the reversible reaction in which hydroxymethyl group from 5,10-methylenetetrahydrofolate is transferred onto alpha-ketoisovalerate to form ketopantoate. This is 3-methyl-2-oxobutanoate hydroxymethyltransferase from Psychromonas ingrahamii (strain DSM 17664 / CCUG 51855 / 37).